The following is a 219-amino-acid chain: N-(5'-phosphoribosyl)anthranilate isomerase (219 aa).

Belongs to the TrpF family.

It catalyses the reaction N-(5-phospho-beta-D-ribosyl)anthranilate = 1-(2-carboxyphenylamino)-1-deoxy-D-ribulose 5-phosphate. Its pathway is amino-acid biosynthesis; L-tryptophan biosynthesis; L-tryptophan from chorismate: step 3/5. The polypeptide is N-(5'-phosphoribosyl)anthranilate isomerase (Chloroherpeton thalassium (strain ATCC 35110 / GB-78)).